A 68-amino-acid polypeptide reads, in one-letter code: Protein transport protein Sec61 gamma-2 subunit (68 aa).

Residues 1-32 (MDKVVKFAEPGRAFAKDSIRLVKRCTKPDRKE) are Cytoplasmic-facing. The helical transmembrane segment at 33-61 (FQKIAIATAVGFCIMGFIGFFVKLIHIPI) threads the bilayer. Residues 62-68 (NNIIVGS) lie on the Extracellular side of the membrane.

Belongs to the SecE/SEC61-gamma family. As to quaternary structure, heterotrimeric complex composed of SEC61-alpha, SEC61-beta and SEC61-gamma.

It localises to the endoplasmic reticulum membrane. Functionally, necessary for protein translocation in the endoplasmic reticulum. This Drosophila melanogaster (Fruit fly) protein is Protein transport protein Sec61 gamma-2 subunit (Sec61gamma).